The primary structure comprises 866 residues: Paramyosin (866 aa).

A nonhelical region region spans residues 1 to 22 (MMNHDTESHVKISRTIYRGVSP). A coiled-coil region spans residues 23–839 (STTRLESRVR…AERTVTVRRV (817 aa)). The nonhelical region stretch occupies residues 840–866 (GPGGRAVSVARELSVTSNRGMRATSMM).

The protein belongs to the paramyosin family. In terms of assembly, homodimer.

The protein localises to the cytoplasm. It localises to the myofibril. Functionally, paramyosin is a major structural component of many thick filaments isolated from invertebrate muscles. The polypeptide is Paramyosin (Schistosoma japonicum (Blood fluke)).